We begin with the raw amino-acid sequence, 892 residues long: Alanine--tRNA ligase (892 aa).

His-574, His-578, Cys-676, and His-680 together coordinate Zn(2+).

Belongs to the class-II aminoacyl-tRNA synthetase family. Zn(2+) is required as a cofactor.

The protein resides in the cytoplasm. It catalyses the reaction tRNA(Ala) + L-alanine + ATP = L-alanyl-tRNA(Ala) + AMP + diphosphate. Its function is as follows. Catalyzes the attachment of alanine to tRNA(Ala) in a two-step reaction: alanine is first activated by ATP to form Ala-AMP and then transferred to the acceptor end of tRNA(Ala). Also edits incorrectly charged Ser-tRNA(Ala) and Gly-tRNA(Ala) via its editing domain. The protein is Alanine--tRNA ligase of Prochlorococcus marinus (strain MIT 9313).